A 92-amino-acid chain; its full sequence is MPRSLKKGPFIDLHLLKKVEKAVESGDKKPLRTWSRRSTIFPNMIGLTIAVHNGRQHVPVFVSDEMVGHKLGEFAPTRTYRGHAADKKAKKK.

It belongs to the universal ribosomal protein uS19 family.

Functionally, protein S19 forms a complex with S13 that binds strongly to the 16S ribosomal RNA. The sequence is that of Small ribosomal subunit protein uS19 from Klebsiella pneumoniae (strain 342).